The sequence spans 355 residues: uncharacterized protein (355 aa).

Belongs to the TmcAL family.

This is an uncharacterized protein from Methanocaldococcus jannaschii (strain ATCC 43067 / DSM 2661 / JAL-1 / JCM 10045 / NBRC 100440) (Methanococcus jannaschii).